Here is a 396-residue protein sequence, read N- to C-terminus: Acetylornithine aminotransferase 2 (396 aa).

Pyridoxal 5'-phosphate contacts are provided by residues 102-103 (GA) and phenylalanine 134. Arginine 137 serves as a coordination point for N(2)-acetyl-L-ornithine. Residue 219-222 (DEVQ) participates in pyridoxal 5'-phosphate binding. Lysine 248 is modified (N6-(pyridoxal phosphate)lysine). Threonine 276 contributes to the pyridoxal 5'-phosphate binding site.

It belongs to the class-III pyridoxal-phosphate-dependent aminotransferase family. ArgD subfamily. In terms of assembly, homodimer. It depends on pyridoxal 5'-phosphate as a cofactor.

It localises to the cytoplasm. It catalyses the reaction N(2)-acetyl-L-ornithine + 2-oxoglutarate = N-acetyl-L-glutamate 5-semialdehyde + L-glutamate. Its pathway is amino-acid biosynthesis; L-arginine biosynthesis; N(2)-acetyl-L-ornithine from L-glutamate: step 4/4. The chain is Acetylornithine aminotransferase 2 from Bordetella pertussis (strain Tohama I / ATCC BAA-589 / NCTC 13251).